The sequence spans 152 residues: Protein-export protein SecB (152 aa).

Belongs to the SecB family. In terms of assembly, homotetramer, a dimer of dimers. One homotetramer interacts with 1 SecA dimer.

Its subcellular location is the cytoplasm. One of the proteins required for the normal export of preproteins out of the cell cytoplasm. It is a molecular chaperone that binds to a subset of precursor proteins, maintaining them in a translocation-competent state. It also specifically binds to its receptor SecA. The chain is Protein-export protein SecB from Rickettsia rickettsii (strain Iowa).